The following is a 601-amino-acid chain: Transcription factor Ken (601 aa).

The region spanning 33-101 is the BTB domain; sequence ADLTIVCENK…LYSGQTCITS (69 aa). Disordered stretches follow at residues 188–276, 331–365, and 471–491; these read AAEC…TINP, LSDG…DNQP, and DHPE…AGSN. Composition is skewed to basic and acidic residues over residues 190-200 and 207-216; these read ECERSGGHNNK and CTHKDNKSDK. Over residues 223-234 the composition is skewed to polar residues; the sequence is NLSNAPPSGTSG. A compositionally biased stretch (low complexity) spans 235-247; the sequence is SNSNISTSSNHQQ. Basic residues predominate over residues 248 to 258; the sequence is QQHHHHHHHNH. Low complexity predominate over residues 259 to 275; that stretch reads NNNNNNNNNNSSSSTIN. Positions 476-490 are enriched in low complexity; the sequence is RSGSASGSGANLAGS. 3 C2H2-type zinc fingers span residues 500-522, 528-551, and 567-590; these read YRCE…LRVH, FACR…CSVH, and YSCC…SGHH.

As to expression, expressed from stage 5 in two rather faint stripes at positions of 64% (anterior domain; AD) and 17% (posterior domain; PD) egg length. During early gastrulation, at stage 6, these two stripes become more evident and detectable at the region posterior to the cephalic furrow and in the hindgut primordium. The AD disappears as gastrulation proceeds, while the PD remains. At stage 15, the AD appears again in the foregut, and PD expression in the hindgut and anal pad. In imaginal disks, it is ubiquitously expressed in both males and females in genital and eye-antennal disks. Not expressed in the brain. In genital disks, it is expressed along the margin of the anterior bulbus in males, while in females it is expressed in the posterior compartment along the anterior-posterior border, with medial expansion in the most posterior region.

It localises to the nucleus. Transcription factor required for terminalia development. Negative regulator of the JAK/STAT pathway: represses JAK/STAT-dependent expression of ventral veins lacking (vvl) in the posterior spiracles. The sequence is that of Transcription factor Ken (ken) from Drosophila melanogaster (Fruit fly).